Here is a 548-residue protein sequence, read N- to C-terminus: T-complex protein 1 subunit theta (548 aa).

The segment at 527–548 (QATGGPKPRGPKAQDEDDDGMA) is disordered.

Belongs to the TCP-1 chaperonin family. Heterooligomeric complex.

It is found in the cytoplasm. In terms of biological role, molecular chaperone; assists the folding of proteins upon ATP hydrolysis. Known to play a role, in vitro, in the folding of actin and tubulin. Required for correct subcellular localization of pgl-1. The chain is T-complex protein 1 subunit theta (cct-8) from Caenorhabditis elegans.